Consider the following 96-residue polypeptide: MSAVETCADGLVLRLYIQPKASRDSIVGVHGDELKVAITAPPVDGQANAHLVKFLAKQFRVAKSQVLIEKGELGRHKQVKIIAPQQIPTAVAALTE.

This sequence belongs to the UPF0235 family.

The polypeptide is UPF0235 protein KPK_0722 (Klebsiella pneumoniae (strain 342)).